Here is a 69-residue protein sequence, read N- to C-terminus: DNA gyrase inhibitor YacG (69 aa).

Residues cysteine 14, cysteine 17, cysteine 33, and cysteine 37 each contribute to the Zn(2+) site. Positions 46–69 (ADEEKSIPGAPDMSDSDGWSEDQY) are disordered. Residues 59–69 (SDSDGWSEDQY) show a composition bias toward acidic residues.

The protein belongs to the DNA gyrase inhibitor YacG family. In terms of assembly, interacts with GyrB. The cofactor is Zn(2+).

Functionally, inhibits all the catalytic activities of DNA gyrase by preventing its interaction with DNA. Acts by binding directly to the C-terminal domain of GyrB, which probably disrupts DNA binding by the gyrase. The chain is DNA gyrase inhibitor YacG from Aliivibrio fischeri (strain ATCC 700601 / ES114) (Vibrio fischeri).